Here is a 179-residue protein sequence, read N- to C-terminus: Large ribosomal subunit protein uL5 (179 aa).

This sequence belongs to the universal ribosomal protein uL5 family. In terms of assembly, part of the 50S ribosomal subunit; part of the 5S rRNA/L5/L18/L25 subcomplex. Contacts the 5S rRNA and the P site tRNA. Forms a bridge to the 30S subunit in the 70S ribosome.

In terms of biological role, this is one of the proteins that bind and probably mediate the attachment of the 5S RNA into the large ribosomal subunit, where it forms part of the central protuberance. In the 70S ribosome it contacts protein S13 of the 30S subunit (bridge B1b), connecting the 2 subunits; this bridge is implicated in subunit movement. Contacts the P site tRNA; the 5S rRNA and some of its associated proteins might help stabilize positioning of ribosome-bound tRNAs. The sequence is that of Large ribosomal subunit protein uL5 from Stutzerimonas stutzeri (strain A1501) (Pseudomonas stutzeri).